The chain runs to 456 residues: Pantothenate kinase 2, mitochondrial (456 aa).

Residues 16-89 (AGRFGAPMER…TSAGRPRAEG (74 aa)) form a disordered region. Low complexity-rich tracts occupy residues 28–39 (RAAATSAAVGES) and 55–65 (SSAAPSGSGEA). 3 positions are modified to phosphoserine: Ser-55, Ser-56, and Ser-75. The Nuclear export signal signature appears at 154–161 (LELKDLTL). Residue Glu-224 is the Proton acceptor of the active site. Acetyl-CoA contacts are provided by Ser-278, Ser-281, and Arg-293.

The protein belongs to the type II pantothenate kinase family. As to quaternary structure, homodimer.

It localises to the cytoplasm. Its subcellular location is the cytosol. The catalysed reaction is (R)-pantothenate + ATP = (R)-4'-phosphopantothenate + ADP + H(+). It participates in cofactor biosynthesis; coenzyme A biosynthesis; CoA from (R)-pantothenate: step 1/5. Inhibited by acetyl-CoA. Inhibited by calcium hopantenate. Activated by palmitoylcarnitine. Functionally, catalyzes the phosphorylation of pantothenate to generate 4'-phosphopantothenate in the first and rate-determining step of coenzyme A (CoA) synthesis. The chain is Pantothenate kinase 2, mitochondrial (Pank2) from Mus musculus (Mouse).